The primary structure comprises 363 residues: Phosphoserine aminotransferase (363 aa).

The L-glutamate site is built by Ser9 and Arg42. Pyridoxal 5'-phosphate contacts are provided by residues 76–77, Trp102, Thr154, Asp174, and Gln197; that span reads AR. Residue Lys198 is modified to N6-(pyridoxal phosphate)lysine. Residue 240–241 participates in pyridoxal 5'-phosphate binding; sequence NT.

It belongs to the class-V pyridoxal-phosphate-dependent aminotransferase family. SerC subfamily. In terms of assembly, homodimer. It depends on pyridoxal 5'-phosphate as a cofactor.

The protein localises to the cytoplasm. The catalysed reaction is O-phospho-L-serine + 2-oxoglutarate = 3-phosphooxypyruvate + L-glutamate. It carries out the reaction 4-(phosphooxy)-L-threonine + 2-oxoglutarate = (R)-3-hydroxy-2-oxo-4-phosphooxybutanoate + L-glutamate. Its pathway is amino-acid biosynthesis; L-serine biosynthesis; L-serine from 3-phospho-D-glycerate: step 2/3. It participates in cofactor biosynthesis; pyridoxine 5'-phosphate biosynthesis; pyridoxine 5'-phosphate from D-erythrose 4-phosphate: step 3/5. Functionally, catalyzes the reversible conversion of 3-phosphohydroxypyruvate to phosphoserine and of 3-hydroxy-2-oxo-4-phosphonooxybutanoate to phosphohydroxythreonine. This Baumannia cicadellinicola subsp. Homalodisca coagulata protein is Phosphoserine aminotransferase.